Reading from the N-terminus, the 255-residue chain is Aliphatic sulfonates import ATP-binding protein SsuB (255 aa).

Positions 12 to 233 (LLLNAVSKHY…RLGSVRLAEL (222 aa)) constitute an ABC transporter domain. 44 to 51 (GRSGGGKS) provides a ligand contact to ATP.

Belongs to the ABC transporter superfamily. Aliphatic sulfonates importer (TC 3.A.1.17.2) family. In terms of assembly, the complex is composed of two ATP-binding proteins (SsuB), two transmembrane proteins (SsuC) and a solute-binding protein (SsuA).

Its subcellular location is the cell inner membrane. The enzyme catalyses ATP + H2O + aliphatic sulfonate-[sulfonate-binding protein]Side 1 = ADP + phosphate + aliphatic sulfonateSide 2 + [sulfonate-binding protein]Side 1.. Functionally, part of the ABC transporter complex SsuABC involved in aliphatic sulfonates import. Responsible for energy coupling to the transport system. The sequence is that of Aliphatic sulfonates import ATP-binding protein SsuB from Shigella flexneri.